Here is a 205-residue protein sequence, read N- to C-terminus: Ribosomal RNA small subunit methyltransferase G (205 aa).

S-adenosyl-L-methionine-binding positions include glycine 70, leucine 75, 124-125, and arginine 138; that span reads IE.

This sequence belongs to the methyltransferase superfamily. RNA methyltransferase RsmG family.

The protein resides in the cytoplasm. It carries out the reaction guanosine(527) in 16S rRNA + S-adenosyl-L-methionine = N(7)-methylguanosine(527) in 16S rRNA + S-adenosyl-L-homocysteine. Functionally, specifically methylates the N7 position of guanine in position 527 of 16S rRNA. The protein is Ribosomal RNA small subunit methyltransferase G of Ruegeria sp. (strain TM1040) (Silicibacter sp.).